The primary structure comprises 469 residues: 3-isopropylmalate dehydratase large subunit (469 aa).

[4Fe-4S] cluster contacts are provided by Cys-350, Cys-410, and Cys-413.

The protein belongs to the aconitase/IPM isomerase family. LeuC type 1 subfamily. In terms of assembly, heterodimer of LeuC and LeuD. Requires [4Fe-4S] cluster as cofactor.

The catalysed reaction is (2R,3S)-3-isopropylmalate = (2S)-2-isopropylmalate. The protein operates within amino-acid biosynthesis; L-leucine biosynthesis; L-leucine from 3-methyl-2-oxobutanoate: step 2/4. Its function is as follows. Catalyzes the isomerization between 2-isopropylmalate and 3-isopropylmalate, via the formation of 2-isopropylmaleate. The protein is 3-isopropylmalate dehydratase large subunit of Rhodopseudomonas palustris (strain ATCC BAA-98 / CGA009).